Reading from the N-terminus, the 232-residue chain is Sugar fermentation stimulation protein homolog (232 aa).

This sequence belongs to the SfsA family.

This chain is Sugar fermentation stimulation protein homolog, found in Moorella thermoacetica (strain ATCC 39073 / JCM 9320).